Here is a 329-residue protein sequence, read N- to C-terminus: Methionyl-tRNA formyltransferase (329 aa).

Residue 118 to 121 coordinates (6S)-5,6,7,8-tetrahydrofolate; sequence SLLP.

Belongs to the Fmt family.

The enzyme catalyses L-methionyl-tRNA(fMet) + (6R)-10-formyltetrahydrofolate = N-formyl-L-methionyl-tRNA(fMet) + (6S)-5,6,7,8-tetrahydrofolate + H(+). In terms of biological role, attaches a formyl group to the free amino group of methionyl-tRNA(fMet). The formyl group appears to play a dual role in the initiator identity of N-formylmethionyl-tRNA by promoting its recognition by IF2 and preventing the misappropriation of this tRNA by the elongation apparatus. The polypeptide is Methionyl-tRNA formyltransferase (Corynebacterium urealyticum (strain ATCC 43042 / DSM 7109)).